We begin with the raw amino-acid sequence, 592 residues long: Probable oxidoreductase EphD (592 aa).

The AB hydrolase-1 domain occupies 30–286; sequence PTVVLVHGFP…KAGHFSPMSH (257 aa). Residue S461 coordinates substrate. Y474 (proton acceptor) is an active-site residue.

This sequence belongs to the short-chain dehydrogenases/reductases (SDR) family.

In Mycobacterium bovis (strain ATCC BAA-935 / AF2122/97), this protein is Probable oxidoreductase EphD (ephD).